We begin with the raw amino-acid sequence, 310 residues long: MDVNNLSSNWKKLQETLKKQSASSSSKKRKTSDRETQNVTTKKQKIETIERKKSSLKKKRMSEGQEHGGDESAQEPMVKTISHKSSTATISEQSRTESKPTKVNEGRSPTAEIGKYVAMDCEMVGVGPNPDNDSALARVSIVNFNGEQVYDSYVRPKEMITDWRTHVSGISPKHMAEARSLEQVQKDVAEILDGRILVGHAVSNDLDALLLGHPKRDIRDTSKHPPYRKIAGGGSPRLKILASEFLGLNIQDGAHSSVEDAKATMLLYRRDKEAFEREHLKKWPIRVVVDKKENGEDQKKKKKKKKPRKR.

Over residues 1–11 the composition is skewed to polar residues; sequence MDVNNLSSNWK. Residues 1 to 107 are disordered; that stretch reads MDVNNLSSNW…SKPTKVNEGR (107 aa). 2 stretches are compositionally biased toward basic and acidic residues: residues 44 to 53 and 61 to 70; these read QKIETIERKK and MSEGQEHGGD. Positions 83–93 are enriched in polar residues; it reads HKSSTATISEQ. A compositionally biased stretch (basic and acidic residues) spans 94-105; it reads SRTESKPTKVNE. The region spanning 115–277 is the Exonuclease domain; it reads KYVAMDCEMV…YRRDKEAFER (163 aa). Positions 287–310 are disordered; the sequence is VVVDKKENGEDQKKKKKKKKPRKR. Positions 288–299 are enriched in basic and acidic residues; the sequence is VVDKKENGEDQK. Residues 300–310 show a composition bias toward basic residues; the sequence is KKKKKKKPRKR.

The protein belongs to the REXO4 family.

Its subcellular location is the nucleus. Exoribonuclease involved in ribosome biosynthesis. Involved in the processing of ITS1, the internal transcribed spacer localized between the 18S and 5.8S rRNAs. This chain is RNA exonuclease 4 (rex4), found in Aspergillus fumigatus (strain ATCC MYA-4609 / CBS 101355 / FGSC A1100 / Af293) (Neosartorya fumigata).